The following is a 315-amino-acid chain: Trimethylguanosine synthase (315 aa).

The required for correct nucleolar localization stretch occupies residues Met1–Arg58. Residue Asp126 participates in S-adenosyl-L-methionine binding. Positions Thr271–Gly315 are disordered. Over residues Asn273–Leu284 the composition is skewed to basic and acidic residues.

This sequence belongs to the methyltransferase superfamily. Trimethylguanosine synthase family. Monomer. Interacts with the spliceosomal snRNP core component SMB1 and the snoRNP components CBF5 and NOP58.

The protein resides in the nucleus. Its subcellular location is the nucleolus. The enzyme catalyses a 5'-end (N(7)-methyl 5'-triphosphoguanosine)-ribonucleoside in snRNA + S-adenosyl-L-methionine = a 5'-end (N(2),N(7)-dimethyl 5'-triphosphoguanosine)-ribonucleoside in snRNA + S-adenosyl-L-homocysteine + H(+). It catalyses the reaction a 5'-end (N(7)-methyl 5'-triphosphoguanosine)-ribonucleoside in snoRNA + S-adenosyl-L-methionine = a 5'-end (N(2),N(7)-dimethyl 5'-triphosphoguanosine)-ribonucleoside in snoRNA + S-adenosyl-L-homocysteine + H(+). It carries out the reaction a 5'-end (N(2),N(7)-dimethyl 5'-triphosphoguanosine)-ribonucleoside in snRNA + S-adenosyl-L-methionine = a 5'-end (N(2),N(2),N(7)-trimethyl 5'-triphosphoguanosine)-ribonucleoside in snRNA + S-adenosyl-L-homocysteine + H(+). The catalysed reaction is a 5'-end (N(2),N(7)-dimethyl 5'-triphosphoguanosine)-ribonucleoside in snoRNA + S-adenosyl-L-methionine = a 5'-end (N(2),N(2),N(7)-trimethyl 5'-triphosphoguanosine)-ribonucleoside in snoRNA + S-adenosyl-L-homocysteine + H(+). With respect to regulation, substrate inhibited by S-adenosyl-L-homocysteine. Functionally, catalyzes the two serial methylation steps for the conversion of the 7-monomethylguanosine (m(7)G) caps of snRNAs and snoRNAs to a 2,2,7-trimethylguanosine (m(2,2,7)G) cap structure. The enzyme is specific for guanine, and N7 methylation must precede N2 methylation. Hypermethylates the m3G cap on TLC1 telomerase which affects telomere silencing and telomere length regulation. Required for pre-mRNA splicing, pre-rRNA processing and small ribosomal subunit synthesis. Involved in nucleolar structural organization. The protein is Trimethylguanosine synthase (TGS1) of Saccharomyces cerevisiae (strain ATCC 204508 / S288c) (Baker's yeast).